The primary structure comprises 267 residues: 4-hydroxy-tetrahydrodipicolinate reductase (267 aa).

NAD(+) contacts are provided by residues 8-13 and aspartate 34; that span reads GAAGRM. Position 35 (arginine 35) interacts with NADP(+). NAD(+)-binding positions include 98 to 100 and 122 to 125; these read GTT and AANF. The active-site Proton donor/acceptor is histidine 155. Histidine 156 contributes to the (S)-2,3,4,5-tetrahydrodipicolinate binding site. Lysine 159 acts as the Proton donor in catalysis. 165 to 166 contacts (S)-2,3,4,5-tetrahydrodipicolinate; that stretch reads GT.

This sequence belongs to the DapB family.

The protein localises to the cytoplasm. The catalysed reaction is (S)-2,3,4,5-tetrahydrodipicolinate + NAD(+) + H2O = (2S,4S)-4-hydroxy-2,3,4,5-tetrahydrodipicolinate + NADH + H(+). It catalyses the reaction (S)-2,3,4,5-tetrahydrodipicolinate + NADP(+) + H2O = (2S,4S)-4-hydroxy-2,3,4,5-tetrahydrodipicolinate + NADPH + H(+). It functions in the pathway amino-acid biosynthesis; L-lysine biosynthesis via DAP pathway; (S)-tetrahydrodipicolinate from L-aspartate: step 4/4. Catalyzes the conversion of 4-hydroxy-tetrahydrodipicolinate (HTPA) to tetrahydrodipicolinate. The protein is 4-hydroxy-tetrahydrodipicolinate reductase of Pseudomonas putida (strain GB-1).